The following is a 145-amino-acid chain: SsrA-binding protein (145 aa).

It belongs to the SmpB family.

It is found in the cytoplasm. Required for rescue of stalled ribosomes mediated by trans-translation. Binds to transfer-messenger RNA (tmRNA), required for stable association of tmRNA with ribosomes. tmRNA and SmpB together mimic tRNA shape, replacing the anticodon stem-loop with SmpB. tmRNA is encoded by the ssrA gene; the 2 termini fold to resemble tRNA(Ala) and it encodes a 'tag peptide', a short internal open reading frame. During trans-translation Ala-aminoacylated tmRNA acts like a tRNA, entering the A-site of stalled ribosomes, displacing the stalled mRNA. The ribosome then switches to translate the ORF on the tmRNA; the nascent peptide is terminated with the 'tag peptide' encoded by the tmRNA and targeted for degradation. The ribosome is freed to recommence translation, which seems to be the essential function of trans-translation. The chain is SsrA-binding protein from Mycoplasma genitalium (strain ATCC 33530 / DSM 19775 / NCTC 10195 / G37) (Mycoplasmoides genitalium).